The primary structure comprises 319 residues: Tryptophan--tRNA ligase (319 aa).

ATP contacts are provided by residues 8 to 10 and 16 to 17; these read QPS and GN. The 'HIGH' region signature appears at 9-17; that stretch reads PSGDLHIGN. L-tryptophan is bound at residue Asp-131. Residues 143 to 145, Val-182, and 189 to 193 each bind ATP; these read GKD and KMSKS. Residues 189-193 carry the 'KMSKS' region motif; the sequence is KMSKS.

This sequence belongs to the class-I aminoacyl-tRNA synthetase family. As to quaternary structure, homodimer.

The protein resides in the cytoplasm. The enzyme catalyses tRNA(Trp) + L-tryptophan + ATP = L-tryptophyl-tRNA(Trp) + AMP + diphosphate + H(+). Catalyzes the attachment of tryptophan to tRNA(Trp). This is Tryptophan--tRNA ligase from Campylobacter jejuni subsp. jejuni serotype O:2 (strain ATCC 700819 / NCTC 11168).